We begin with the raw amino-acid sequence, 265 residues long: S-adenosylmethionine decarboxylase proenzyme (265 aa).

Catalysis depends on serine 114, which acts as the Schiff-base intermediate with substrate; via pyruvic acid. Serine 114 carries the pyruvic acid (Ser); by autocatalysis modification. Catalysis depends on histidine 119, which acts as the Proton acceptor; for processing activity. Cysteine 142 acts as the Proton donor; for catalytic activity in catalysis.

Belongs to the prokaryotic AdoMetDC family. Type 2 subfamily. As to quaternary structure, heterooctamer of four alpha and four beta chains arranged as a tetramer of alpha/beta heterodimers. Pyruvate is required as a cofactor. Post-translationally, is synthesized initially as an inactive proenzyme. Formation of the active enzyme involves a self-maturation process in which the active site pyruvoyl group is generated from an internal serine residue via an autocatalytic post-translational modification. Two non-identical subunits are generated from the proenzyme in this reaction, and the pyruvate is formed at the N-terminus of the alpha chain, which is derived from the carboxyl end of the proenzyme. The post-translation cleavage follows an unusual pathway, termed non-hydrolytic serinolysis, in which the side chain hydroxyl group of the serine supplies its oxygen atom to form the C-terminus of the beta chain, while the remainder of the serine residue undergoes an oxidative deamination to produce ammonia and the pyruvoyl group blocking the N-terminus of the alpha chain.

It catalyses the reaction S-adenosyl-L-methionine + H(+) = S-adenosyl 3-(methylsulfanyl)propylamine + CO2. It participates in amine and polyamine biosynthesis; S-adenosylmethioninamine biosynthesis; S-adenosylmethioninamine from S-adenosyl-L-methionine: step 1/1. Catalyzes the decarboxylation of S-adenosylmethionine to S-adenosylmethioninamine (dcAdoMet), the propylamine donor required for the synthesis of the polyamines spermine and spermidine from the diamine putrescine. The polypeptide is S-adenosylmethionine decarboxylase proenzyme (Buchnera aphidicola subsp. Acyrthosiphon pisum (strain 5A)).